Here is a 257-residue protein sequence, read N- to C-terminus: MADGALPTMSLKGKVSEAEWQARVDLAALYRLVALHGWDDMIFTHISARIPGPEHHFLINPYGMFFGEITASSLVKVDLEGNVIDKTPYYINPAGFTIHSAVHAAREDAHYVMHLHSDQGVAVSAHKEGLLPLTQHSLIVLPQLAYHDYEGIALNLEERERIVADLGQKKLLMLRNHGTLSVGATAAECWLGMFFLERACAQQVMALSIGRDNVLLAPEAAQDEVRKQIGMGMGMIGGLAWPGCLRKLDRESPGYAD.

His-114, His-116, and His-177 together coordinate Zn(2+).

The protein belongs to the aldolase class II family. It depends on Zn(2+) as a cofactor.

The sequence is that of Putative aldolase class 2 protein CC_1201 from Caulobacter vibrioides (strain ATCC 19089 / CIP 103742 / CB 15) (Caulobacter crescentus).